The sequence spans 248 residues: 1-(5-phosphoribosyl)-5-[(5-phosphoribosylamino)methylideneamino] imidazole-4-carboxamide isomerase (248 aa).

The Proton acceptor role is filled by Asp8. Asp131 functions as the Proton donor in the catalytic mechanism.

Belongs to the HisA/HisF family.

It localises to the cytoplasm. It carries out the reaction 1-(5-phospho-beta-D-ribosyl)-5-[(5-phospho-beta-D-ribosylamino)methylideneamino]imidazole-4-carboxamide = 5-[(5-phospho-1-deoxy-D-ribulos-1-ylimino)methylamino]-1-(5-phospho-beta-D-ribosyl)imidazole-4-carboxamide. The protein operates within amino-acid biosynthesis; L-histidine biosynthesis; L-histidine from 5-phospho-alpha-D-ribose 1-diphosphate: step 4/9. The polypeptide is 1-(5-phosphoribosyl)-5-[(5-phosphoribosylamino)methylideneamino] imidazole-4-carboxamide isomerase (Nitrosomonas eutropha (strain DSM 101675 / C91 / Nm57)).